Reading from the N-terminus, the 121-residue chain is Small ribosomal subunit protein uS13 (121 aa).

Residues Gly-94–Lys-121 are disordered.

It belongs to the universal ribosomal protein uS13 family. In terms of assembly, part of the 30S ribosomal subunit. Forms a loose heterodimer with protein S19. Forms two bridges to the 50S subunit in the 70S ribosome.

In terms of biological role, located at the top of the head of the 30S subunit, it contacts several helices of the 16S rRNA. In the 70S ribosome it contacts the 23S rRNA (bridge B1a) and protein L5 of the 50S subunit (bridge B1b), connecting the 2 subunits; these bridges are implicated in subunit movement. Contacts the tRNAs in the A and P-sites. In Leptothrix cholodnii (strain ATCC 51168 / LMG 8142 / SP-6) (Leptothrix discophora (strain SP-6)), this protein is Small ribosomal subunit protein uS13.